The following is a 354-amino-acid chain: Ferrochelatase (354 aa).

Positions 214 and 295 each coordinate Fe cation.

This sequence belongs to the ferrochelatase family.

The protein localises to the cytoplasm. It catalyses the reaction heme b + 2 H(+) = protoporphyrin IX + Fe(2+). The protein operates within porphyrin-containing compound metabolism; protoheme biosynthesis; protoheme from protoporphyrin-IX: step 1/1. Functionally, catalyzes the ferrous insertion into protoporphyrin IX. The polypeptide is Ferrochelatase (Burkholderia cenocepacia (strain HI2424)).